The following is a 305-amino-acid chain: uncharacterized protein (305 aa).

A disordered region spans residues serine 53 to glycine 185. Composition is skewed to basic and acidic residues over residues valine 95–threonine 116 and glycine 128–glycine 142. The segment covering glycine 161–glutamate 171 has biased composition (polar residues). The RING-type; atypical zinc-finger motif lies at cysteine 260–arginine 302.

This is an uncharacterized protein from Encephalitozoon cuniculi (strain GB-M1) (Microsporidian parasite).